Reading from the N-terminus, the 260-residue chain is Ditrans,polycis-undecaprenyl-diphosphate synthase ((2E,6E)-farnesyl-diphosphate specific) (260 aa).

The active site involves Asp-20. Mg(2+) is bound at residue Asp-20. Substrate-binding positions include 21–24 (GNGR), Trp-25, Arg-33, His-37, and 65–67 (SSE). The active-site Proton acceptor is Asn-68. Residues Trp-69, Arg-71, and Arg-188 each contribute to the substrate site. His-193 serves as a coordination point for Mg(2+). 194-196 (RIS) is a substrate binding site. Glu-207 contributes to the Mg(2+) binding site.

The protein belongs to the UPP synthase family. In terms of assembly, homodimer. The cofactor is Mg(2+).

It carries out the reaction 8 isopentenyl diphosphate + (2E,6E)-farnesyl diphosphate = di-trans,octa-cis-undecaprenyl diphosphate + 8 diphosphate. In terms of biological role, catalyzes the sequential condensation of isopentenyl diphosphate (IPP) with (2E,6E)-farnesyl diphosphate (E,E-FPP) to yield (2Z,6Z,10Z,14Z,18Z,22Z,26Z,30Z,34E,38E)-undecaprenyl diphosphate (di-trans,octa-cis-UPP). UPP is the precursor of glycosyl carrier lipid in the biosynthesis of bacterial cell wall polysaccharide components such as peptidoglycan and lipopolysaccharide. This Wigglesworthia glossinidia brevipalpis protein is Ditrans,polycis-undecaprenyl-diphosphate synthase ((2E,6E)-farnesyl-diphosphate specific).